The chain runs to 479 residues: Anaerobic nitric oxide reductase flavorubredoxin (479 aa).

Positions 30-210 are zinc metallo-hydrolase; the sequence is LRGSSYNSYL…PFSRLVTPKI (181 aa). Residues His-79, Glu-81, Asp-83, His-147, Asp-166, and His-227 each coordinate Fe cation. Residues 254 to 393 enclose the Flavodoxin-like domain; the sequence is ITIFYDTMSN…LCRQHGRDIA (140 aa). FMN-binding positions include 260-264 and 342-369; these read TMSNN and AFGS…EMSL. The Rubredoxin-like domain occupies 423 to 474; sequence GPKMQCSVCQWIYDPAQGEPLQDVAPGTPWSDVPDNFLCPECSLGKDVFDVL. Positions 428, 431, 461, and 464 each coordinate Fe cation.

This sequence in the N-terminal section; belongs to the zinc metallo-hydrolase group 3 family. In terms of assembly, homotetramer. It depends on Fe cation as a cofactor. Requires FMN as cofactor.

It is found in the cytoplasm. The protein operates within nitrogen metabolism; nitric oxide reduction. In terms of biological role, anaerobic nitric oxide reductase; uses NADH to detoxify nitric oxide (NO), protecting several 4Fe-4S NO-sensitive enzymes. Has at least 2 reductase partners, only one of which (NorW, flavorubredoxin reductase) has been identified. NO probably binds to the di-iron center; electrons enter from the NorW at rubredoxin and are transferred sequentially to the FMN center and the di-iron center. Also able to function as an aerobic oxygen reductase. This chain is Anaerobic nitric oxide reductase flavorubredoxin, found in Salmonella choleraesuis (strain SC-B67).